A 313-amino-acid polypeptide reads, in one-letter code: MLTTQSLVERFKLEVITGEAGLNKQIKNTDISRPGLEMAGYFSHYASDRIQLLGTTELSFYNLLPDEERKGRMRKLCRPETPAIIVTRDLEPPEELIEAAKENETPLITSTIATTQLMSRLTTFLEHELARTTSLHGVLVDVYGVGVLITGDSGIGKSETALELIKRGHRLVADDNVEIREISKDELTGRAPKLIEHLLEIRGLGIINVMTLFGAGSILTEKRLRLNIHLENWHKEKLYDRVGLNEETLRILDTEITKKTIPVRPGRNVAVIIEVAAMNYRLNIMGINTAEEFNERLNAEILRNGNHSEGNNQ.

Active-site residues include His-136 and Lys-157. Gly-151–Ser-158 contributes to the ATP binding site. Mg(2+) is bound at residue Ser-158. The Proton acceptor; for phosphorylation activity. Proton donor; for dephosphorylation activity role is filled by Asp-175. The tract at residues Leu-199–Asn-208 is important for the catalytic mechanism of both phosphorylation and dephosphorylation. Position 200 (Glu-200) interacts with Mg(2+). Arg-241 is an active-site residue. The important for the catalytic mechanism of dephosphorylation stretch occupies residues Pro-262–Arg-267.

Belongs to the HPrK/P family. Homohexamer. Mg(2+) is required as a cofactor.

It catalyses the reaction [HPr protein]-L-serine + ATP = [HPr protein]-O-phospho-L-serine + ADP + H(+). It carries out the reaction [HPr protein]-O-phospho-L-serine + phosphate + H(+) = [HPr protein]-L-serine + diphosphate. Its function is as follows. Catalyzes the ATP- as well as the pyrophosphate-dependent phosphorylation of a specific serine residue in HPr, a phosphocarrier protein of the phosphoenolpyruvate-dependent sugar phosphotransferase system (PTS). HprK/P also catalyzes the pyrophosphate-producing, inorganic phosphate-dependent dephosphorylation (phosphorolysis) of seryl-phosphorylated HPr (P-Ser-HPr). The two antagonistic activities of HprK/P are regulated by several intracellular metabolites, which change their concentration in response to the absence or presence of rapidly metabolisable carbon sources (glucose, fructose, etc.) in the growth medium. Therefore, by controlling the phosphorylation state of HPr, HPrK/P is a sensor enzyme that plays a major role in the regulation of carbon metabolism and sugar transport: it mediates carbon catabolite repression (CCR), and regulates PTS-catalyzed carbohydrate uptake and inducer exclusion. In Staphylococcus saprophyticus subsp. saprophyticus (strain ATCC 15305 / DSM 20229 / NCIMB 8711 / NCTC 7292 / S-41), this protein is HPr kinase/phosphorylase.